The chain runs to 190 residues: Probable thymidylate kinase (190 aa).

7–14 (GIDGAGKT) is an ATP binding site.

Belongs to the thymidylate kinase family.

The enzyme catalyses dTMP + ATP = dTDP + ADP. This chain is Probable thymidylate kinase, found in Thermoplasma volcanium (strain ATCC 51530 / DSM 4299 / JCM 9571 / NBRC 15438 / GSS1).